The following is a 233-amino-acid chain: Cilia- and flagella-associated protein 299 (233 aa).

It is found in the cytoplasm. The protein resides in the nucleus. Its function is as follows. May be involved in spermatogenesis. This is Cilia- and flagella-associated protein 299 from Homo sapiens (Human).